The chain runs to 409 residues: Elongation factor Tu (409 aa).

A tr-type G domain is found at 10–214 (KPHVNIGTIG…AVDSYIPTPE (205 aa)). The G1 stretch occupies residues 19-26 (GHVDHGKT). 19-26 (GHVDHGKT) contacts GTP. T26 contributes to the Mg(2+) binding site. The segment at 60–64 (GITIN) is G2. The segment at 81 to 84 (DCPG) is G3. Residues 81-85 (DCPGH) and 136-139 (NKVD) contribute to the GTP site. The tract at residues 136 to 139 (NKVD) is G4. The interval 174-176 (SGL) is G5.

This sequence belongs to the TRAFAC class translation factor GTPase superfamily. Classic translation factor GTPase family. EF-Tu/EF-1A subfamily. As to quaternary structure, monomer.

The protein localises to the cytoplasm. The catalysed reaction is GTP + H2O = GDP + phosphate + H(+). Functionally, GTP hydrolase that promotes the GTP-dependent binding of aminoacyl-tRNA to the A-site of ribosomes during protein biosynthesis. In Cyanothece sp. (strain PCC 7425 / ATCC 29141), this protein is Elongation factor Tu.